A 963-amino-acid polypeptide reads, in one-letter code: MAAQRIRAANSNGLPRCKSEGTLIDLSEGFSETSFNDIKVPSPSALLVDNPTPFGNAKEVIAIKDYCPTNFTTLKFSKGDHLYVLDTSGGEWWYAHNTTEMGYIPSSYVQPLNYRNSTLSDSGMIDNLPDSPDEVAKELELLGGWTDDKKVPGRMYSNNPFWNGVQTNPFLNGNVPVMPSLDELNPKSTVDLLLFDAGTSSFTESSSATTNSTGNIFDELPVTNGLHAEPPVRRDNPFFRSKRSYSLSELSVLQAKSDAPTSSSFFTGLKSPAPEQFQSREDFRTAWLNHRKLARSCHDLDLLGQSPGWGQTQAVETNIVCKLDSSGGAVQLPDTSISIHVPEGHVAPGETQQISMKALLDPPLELNSDRSCSISPVLEVKLSNLEVKTSIILEMKVSAEIKNDLFSKSTVGLQCLRSDSKEGPYVSVPLNCSCGDTVQAQLHNLEPCMYVAVVAHGPSILYPSTVWDFINKKVTVGLYGPKHIHPSFKTVVTIFGHDCAPKTLLVSEVTRQAPNPAPVALQLWGKHQFVLSRPQDLKVCMFSNMTNYEVKASEQAKVVRGFQLKLGKVSRLIFPITSQNPNELSDFTLRVQVKDDQEAILTQFCVQTPQPPPKSAIKPSGQRRFLKKNEVGKIILSPFATTTKYPTFQDRPVSSLKFGKLLKTVVRQNKNHYLLEYKKGDGIALLSEERVRLRGQLWTKEWYIGYYQGRVGLVHTKNVLVVGRARPSLCSGPELSTSVLLEQILRPCKFLTYIYASVRTLLMENISSWRSFADALGYVNLPLTFFCRAELDSEPERVASVLEKLKEDCNNTENKERKSFQKELVMALLKMDCQGLVVRLIQDFVLLTTAVEVAQRWRELAEKLAKVSKQQMDAYESPHRDRNGVVDSEAMWKPAYDFLLTWSHQIGDSYRDVIQELHLGLDKMKNPITKRWKHLTGTLILVNSLDVLRAAAFSPADQDDFVI.

In terms of domain architecture, SH3 1 spans glycine 55–tyrosine 114. Phosphoserine occurs at positions 131, 246, 251, 279, and 296. One can recognise a ZU5 domain in the interval threonine 317–valine 454. Serine 637 carries the phosphoserine modification. Residues serine 654–arginine 724 enclose the SH3 2 domain.

In terms of assembly, homodimer or homooligomer. Interacts with DNM2, EPS15, clathrin, the adapter protein complex 2/AP-2 and TFRC. Interacts with the Rag GTPases RRAGA, RRAGB, RRAGC and RRAGD; the interaction is most probably direct, preferentially occurs with their inactive GDP-bound form and is negatively regulated by amino acids. As to quaternary structure, (Microbial infection) Interacts with molluscum contagiosum virus protein MC159L; this interaction is important for the suppression of autophagy. Phosphorylated upon EGF stimulation. Phosphorylation prevents interaction with DNM2. As to expression, expressed in all tissues tested with higher expression in pancreas. Expressed by retinal pigment epithelial cells (at protein level).

Its subcellular location is the membrane. The protein localises to the clathrin-coated pit. It localises to the cytoplasmic vesicle. It is found in the clathrin-coated vesicle. The protein resides in the nucleus. Its function is as follows. May function in transferrin receptor internalization at the plasma membrane through a cargo-specific control of clathrin-mediated endocytosis. Alternatively, may act as a negative regulator of the amino acid-induced TOR signaling by inhibiting the formation of active Rag GTPase complexes. Preferentially binds inactive Rag GTPase complexes and prevents their interaction with the mTORC1 complex inhibiting its relocalization to lysosomes and its activation. Thereby, may indirectly regulate cell growth, proliferation and autophagy. The sequence is that of SH3 domain-binding protein 4 (SH3BP4) from Homo sapiens (Human).